We begin with the raw amino-acid sequence, 229 residues long: Lactate utilization protein C (229 aa).

It belongs to the LutC/YkgG family.

Its function is as follows. Is involved in L-lactate degradation and allows cells to grow with lactate as the sole carbon source. This is Lactate utilization protein C from Shouchella clausii (strain KSM-K16) (Alkalihalobacillus clausii).